Here is a 422-residue protein sequence, read N- to C-terminus: Exodeoxyribonuclease 7 large subunit (422 aa).

It belongs to the XseA family. As to quaternary structure, heterooligomer composed of large and small subunits.

The protein localises to the cytoplasm. The catalysed reaction is Exonucleolytic cleavage in either 5'- to 3'- or 3'- to 5'-direction to yield nucleoside 5'-phosphates.. Functionally, bidirectionally degrades single-stranded DNA into large acid-insoluble oligonucleotides, which are then degraded further into small acid-soluble oligonucleotides. The protein is Exodeoxyribonuclease 7 large subunit of Leptospira borgpetersenii serovar Hardjo-bovis (strain JB197).